A 594-amino-acid polypeptide reads, in one-letter code: MHEHLKEKLAILPDQPGCYLMKDKQGTVIYVGKAKVLKNRVRSYFTGSHDGKTLRLVGEIVDFEYIVTSSNLEALILELNLIKKYDPKYNIQLKDDKTYPFIKITAEKQPRLLITRNVKKDKGKYFGPYPNAQSAHETKKLLDRMYPLRKCTNMPDKVCLYYHMGQCLAPCVKEVTEEQNKEIVDEIIKFLNGGHKEVRSELEIKMYEASEKLEFERAKELRDQIAHIDAIMEKQKMIMSDLVDRDVFGYAVDKGWMCVQVFFVRKGKLIERDVSMFPIYDEPEEGFLTFIGQFYENSSHFKPKEIVVPGSIDSELVERFLEVEATQPKRGKKKDLVELANKNAKIALEEKFYLIERDEERTIKAVDHLGKQLGIETPYRIEAFDNSNIQGTNPVSAMIAFIDGKPAKKEYRKYKIKTVQGPDDYESMREVVRRRYTRALKENSPLPDLIIIDGGKGHLAAASDILENELGLYIPMAGLVKDDKHKTSHLIIGVPPEPVMLERNSQEFYLLQRIQDEVHRFAITFHRQLHGKSVIQSALDDIPGIGDKRKKVLLKHFGSLKKMKEASIEEFVEAGMPKNVAETIYTYLTDKKTL.

The GIY-YIG domain maps to 14 to 91 (DQPGCYLMKD…IKKYDPKYNI (78 aa)). Residues 196–231 (KEVRSELEIKMYEASEKLEFERAKELRDQIAHIDAI) enclose the UVR domain.

The protein belongs to the UvrC family. Interacts with UvrB in an incision complex.

The protein localises to the cytoplasm. Functionally, the UvrABC repair system catalyzes the recognition and processing of DNA lesions. UvrC both incises the 5' and 3' sides of the lesion. The N-terminal half is responsible for the 3' incision and the C-terminal half is responsible for the 5' incision. This Bacillus cereus (strain B4264) protein is UvrABC system protein C.